We begin with the raw amino-acid sequence, 875 residues long: Kelch-like protein 29 (875 aa).

Over residues 115–126 (WGQTPINQSTPW) the composition is skewed to polar residues. Disordered regions lie at residues 115–145 (WGQTPINQSTPWDTDEPPSKQMRESDNPGTG) and 248–291 (GPTA…DSAH). A compositionally biased stretch (basic and acidic residues) spans 131 to 140 (PPSKQMRESD). The BTB domain occupies 329-401 (TDLKIVVEGR…VYTGSLVIDS (73 aa)). Kelch repeat units follow at residues 585-635 (VIVL…VSAG), 637-683 (NIYL…VYDG), 684-730 (KIYT…VCGG), 732-778 (IYVF…TLNG), 779-821 (FVFI…VLDG), and 822-870 (KIYA…VIKK).

The polypeptide is Kelch-like protein 29 (KLHL29) (Homo sapiens (Human)).